We begin with the raw amino-acid sequence, 396 residues long: Acetylornithine aminotransferase 2 (396 aa).

Pyridoxal 5'-phosphate is bound by residues 102–103 and F134; that span reads GA. R137 is a binding site for N(2)-acetyl-L-ornithine. 219 to 222 serves as a coordination point for pyridoxal 5'-phosphate; sequence DEVQ. An N6-(pyridoxal phosphate)lysine modification is found at K248. Residue T276 coordinates pyridoxal 5'-phosphate.

It belongs to the class-III pyridoxal-phosphate-dependent aminotransferase family. ArgD subfamily. As to quaternary structure, homodimer. The cofactor is pyridoxal 5'-phosphate.

Its subcellular location is the cytoplasm. The catalysed reaction is N(2)-acetyl-L-ornithine + 2-oxoglutarate = N-acetyl-L-glutamate 5-semialdehyde + L-glutamate. Its pathway is amino-acid biosynthesis; L-arginine biosynthesis; N(2)-acetyl-L-ornithine from L-glutamate: step 4/4. This is Acetylornithine aminotransferase 2 from Bordetella pertussis (strain Tohama I / ATCC BAA-589 / NCTC 13251).